Reading from the N-terminus, the 677-residue chain is WD repeat-containing protein 43 (677 aa).

WD repeat units lie at residues 11–51, 57–119, 124–163, 166–205, 207–259, and 267–309; these read PLAP…LHQE, HLSG…LHSK, GHDNRVNCIQWHQDSGCLYSCSDDKHIVEWNVQTCKVKCK, GDNSSVSSLCISPDGKMLLSAGRTIKLWVLETKEVYRHFT, HATP…KEKS, and TDEP…YCKK. Position 77 is a phosphoserine (Ser-77). Residue Lys-309 forms a Glycyl lysine isopeptide (Lys-Gly) (interchain with G-Cter in SUMO1); alternate linkage. Lys-309 is covalently cross-linked (Glycyl lysine isopeptide (Lys-Gly) (interchain with G-Cter in SUMO2); alternate). A Phosphothreonine modification is found at Thr-321. Lys-384 is covalently cross-linked (Glycyl lysine isopeptide (Lys-Gly) (interchain with G-Cter in SUMO1); alternate). Lys-384 is covalently cross-linked (Glycyl lysine isopeptide (Lys-Gly) (interchain with G-Cter in SUMO2); alternate). Thr-394 carries the post-translational modification Phosphothreonine. Phosphoserine is present on residues Ser-399, Ser-431, Ser-437, and Ser-590. Disordered regions lie at residues 414 to 445 and 582 to 677; these read AIKPAPPQTEQVESKRKSGGNEVSIEERLGAM and SEKT…SEEE. The span at 582–592 shows a compositional bias: polar residues; sequence SEKTKGATSPG. Residues 600–652 are compositionally biased toward acidic residues; that stretch reads EEESSEEESDDEIADKDSEDNWDEDEEESESEKDEDVEEEDEDAEGKDEENGE. Basic and acidic residues predominate over residues 653-663; that stretch reads DRDTASEKELN. Position 656 is a phosphothreonine (Thr-656). Ser-658 bears the Phosphoserine mark. Residues 664-677 are compositionally biased toward acidic residues; the sequence is GDSDLDPENESEEE.

The protein belongs to the UTP5 family. In terms of assembly, part of the small subunit (SSU) processome, composed of more than 70 proteins and the RNA chaperone small nucleolar RNA (snoRNA) U3. May be a component of the proposed t-UTP subcomplex of the ribosomal small subunit (SSU) processome containing at least UTP4, WDR43, HEATR1, UTP15, WDR75. Binds to RNA; binding is required for its chromatin association. Interacts with CDK9, DDX21 and SUPT6H. Interacts with RNA polymerase II. Interacts directly with UTP4 and UTP15.

The protein resides in the nucleus. It localises to the nucleolus. Its subcellular location is the nucleolus fibrillar center. It is found in the nucleoplasm. Its function is as follows. Ribosome biogenesis factor that coordinates hyperactive transcription and ribogenesis. Part of the small subunit (SSU) processome, first precursor of the small eukaryotic ribosomal subunit. During the assembly of the SSU processome in the nucleolus, many ribosome biogenesis factors, an RNA chaperone and ribosomal proteins associate with the nascent pre-rRNA and work in concert to generate RNA folding, modifications, rearrangements and cleavage as well as targeted degradation of pre-ribosomal RNA by the RNA exosome. Involved in nucleolar processing of pre-18S ribosomal RNA. Required for optimal pre-ribosomal RNA transcription by RNA polymerase I. Essential for stem cell pluripotency and embryonic development. In the nucleoplasm, recruited by promoter-associated/nascent transcripts and transcription to active promoters where it facilitates releases of elongation factor P-TEFb and paused RNA polymerase II to allow transcription elongation and maintain high-level expression of its targets genes. In Homo sapiens (Human), this protein is WD repeat-containing protein 43.